A 734-amino-acid chain; its full sequence is MKGATLVALAATIGNFLQGWDNATIAGAMVYINKDLNLPTSVQGLVVAMSLIGATVITTCSGPISDWLGRRPMLILSSVMYFVCGLIMLWSPNVYVLCFARLLNGFGAGLAVTLVPVYISETAPPEIRGQLNTLPQFLGSGGMFLSYCMVFTMSLSDSPSWRAMLGVLSIPSLLYLFLTVFYLPESPRWLVSKGRMDEAKRVLQQLCGREDVTDEMALLVEGLDIGGEKTMEDLLVTLEDHEGDDTLETVDEDGQMRLYGTHENQSYLARPVPEQNSSLGLRSRHGSLANQSMILKDPLVNLFGSLHEKMPEAGGNTRSGIFPHFGSMFSTTADAPHGKPAHWEKDIESHYNKDNDDYATDDGAGDDDDSDNDLRSPLMSRQTTSMDKDMIPHPTSGSTLSMRRHSTLMQGNGESSMGIGGGWHMGYRYENDEYKRYYLKEDGAESRRGSIISIPGGPDGGGSYIHASALVSRSVLGPKSVHGSAMVPPEKIAASGPLWSALLEPGVKRALVVGVGIQILQQFSGINGVLYYTPQILERAGVDILLSSLGLSSISASFLISGLTTLLMLPAIVVAMRLMDVSGRRSLLLWTIPVLIVSLVVLVISELIHISKVVNAALSTGCVVLYFCFFVMGYGPIPNILCSEIFPTRVRGLCIAICAMVFWIGDIIVTYSLPVLLSSIGLVGVFSIYAAVCVISWIFVYMKVPETKGMPLEVITDYFAFGAQAQASAPSKDI.

6 helical membrane passes run 6 to 26 (LVAL…ATIA), 44 to 64 (GLVV…SGPI), 79 to 99 (VMYF…VLCF), 102 to 122 (LLNG…ISET), 133 to 153 (TLPQ…VFTM), and 163 to 183 (AMLG…VFYL). The disordered stretch occupies residues 351–403 (YNKDNDDYATDDGAGDDDDSDNDLRSPLMSRQTTSMDKDMIPHPTSGSTLSMR). Over residues 357–371 (DYATDDGAGDDDDSD) the composition is skewed to acidic residues. 2 positions are modified to phosphoserine: Ser446 and Ser480. 6 helical membrane-spanning segments follow: residues 510–530 (ALVV…NGVL), 556–576 (ASFL…VVAM), 588–608 (LLWT…SELI), 621–641 (GCVV…PNIL), 653–673 (LCIA…TYSL), and 680–700 (IGLV…WIFV).

Belongs to the major facilitator superfamily. Sugar transporter (TC 2.A.1.1) family. In terms of assembly, binds to VIK at the tonoplast. In terms of processing, phosphorylated by VIK; this activation promotes carrier activity. Mostly expressed in juvenile and adult leaves, to a lower extent, in flower tissues, and, at low levels, in roots and stems.

The protein resides in the vacuole membrane. It carries out the reaction D-glucose(out) + H(+)(in) = D-glucose(in) + H(+)(out). It catalyses the reaction sucrose(out) + H(+)(in) = sucrose(in) + H(+)(out). With respect to regulation, enhanced activation by VIK-mediated phosphorylation promoting carrier activity and consequently vacuolar sugar accumulation. Functionally, sugar proton-coupled antiporter which contributes to vacuolar sugar import (e.g. monosaccharides including glucose, sucrose and fructose), particularly during stress responses (e.g. in response to cold). Required for cytosolic glucose homeostasis. In Arabidopsis thaliana (Mouse-ear cress), this protein is Monosaccharide-sensing protein 1.